We begin with the raw amino-acid sequence, 108 residues long: Parvalbumin beta 1 (108 aa).

The residue at position 1 (Ala1) is an N-acetylalanine. EF-hand domains are found at residues 38–73 (KXXDDVKKXXXVLDQDASGFLEVEELKLFLQNFCPK) and 77–108 (LTDAETKAFLKAGDADGDGMLGLDEFAVLVKQ). Ca(2+)-binding residues include Asp51, Asp53, Ser55, Phe57, Glu59, Glu62, Asp90, Asp92, Asp94, Met96, and Glu101.

The protein belongs to the parvalbumin family.

In terms of biological role, in muscle, parvalbumin is thought to be involved in relaxation after contraction. It binds two calcium ions. This Oncorhynchus mykiss (Rainbow trout) protein is Parvalbumin beta 1.